The primary structure comprises 225 residues: GTP cyclohydrolase 1 (225 aa).

A compositionally biased stretch (basic and acidic residues) spans 1–12; that stretch reads MERSKQSHDNQA. A disordered region spans residues 1 to 59; sequence MERSKQSHDNQADSRPTTNESSLNGHFDGLVKKTPGMWDVKGRGTAGESSSHTGSSVVE. 2 stretches are compositionally biased toward polar residues: residues 13 to 24 and 47 to 58; these read DSRPTTNESSLN and GESSSHTGSSVV. Cysteine 149, histidine 152, and cysteine 220 together coordinate Zn(2+).

It belongs to the GTP cyclohydrolase I family. As to quaternary structure, toroid-shaped homodecamer, composed of two pentamers of five dimers.

The protein localises to the cytoplasm. The protein resides in the nucleus. The catalysed reaction is GTP + H2O = 7,8-dihydroneopterin 3'-triphosphate + formate + H(+). Its pathway is cofactor biosynthesis; 7,8-dihydroneopterin triphosphate biosynthesis; 7,8-dihydroneopterin triphosphate from GTP: step 1/1. GTP shows a positive allosteric effect, and tetrahydrobiopterin inhibits the enzyme activity. Zinc is required for catalytic activity. Inhibited by Mg(2+). May positively regulate nitric oxide synthesis in endothelial cells. May be involved in dopamine synthesis. May modify pain sensitivity and persistence. The protein is GTP cyclohydrolase 1 (gch1) of Oncorhynchus mykiss (Rainbow trout).